The sequence spans 167 residues: Probable chorismate pyruvate-lyase (167 aa).

The substrate site is built by arginine 71, isoleucine 110, and glutamate 150.

The protein belongs to the UbiC family.

The protein resides in the cytoplasm. The catalysed reaction is chorismate = 4-hydroxybenzoate + pyruvate. It functions in the pathway cofactor biosynthesis; ubiquinone biosynthesis. Its function is as follows. Removes the pyruvyl group from chorismate, with concomitant aromatization of the ring, to provide 4-hydroxybenzoate (4HB) for the ubiquinone pathway. In Acinetobacter baylyi (strain ATCC 33305 / BD413 / ADP1), this protein is Probable chorismate pyruvate-lyase.